We begin with the raw amino-acid sequence, 969 residues long: Surface protein P113 (969 aa).

The N-terminal stretch at 1–22 is a signal peptide; sequence MKIPFFILHILLLQFLLCLIRC. Asn207 carries N-linked (GlcNAc...) asparagine glycosylation. The interval 223–328 is disordered; that stretch reads IGDESTDSSS…TDTLVNNKEN (106 aa). Polar residues predominate over residues 229-241; the sequence is DSSSMEIQDSTSN. An N-linked (GlcNAc...) asparagine glycan is attached at Asn268. The segment covering 300 to 311 has biased composition (basic and acidic residues); the sequence is KNEDNKDLEHGS. A compositionally biased stretch (low complexity) spans 312–325; that stretch reads SNDVNNNTDTLVNN. Residues Asn317, Asn360, Asn661, and Asn697 are each glycosylated (N-linked (GlcNAc...) asparagine). Residues 688 to 705 show a composition bias toward polar residues; that stretch reads SSNFNIFDSNNTDQNNEQ. Positions 688–947 are disordered; the sequence is SSNFNIFDSN…NETNKTDNGS (260 aa). The segment covering 713–727 has biased composition (low complexity); the sequence is QLLNNNNDDVLSESN. A compositionally biased stretch (basic and acidic residues) spans 728 to 749; it reads NENKEKTSDDATHKETQEKSDQ. An N-linked (GlcNAc...) asparagine glycan is attached at Asn779. Over residues 798 to 811 the composition is skewed to acidic residues; the sequence is EGTEELQQNDEDAE. Over residues 812–822 the composition is skewed to basic and acidic residues; the sequence is SLTKENSKSEE. Over residues 823–841 the composition is skewed to acidic residues; it reads QENEDSTDAEAIDKEEVET. Residues 842–854 are compositionally biased toward basic and acidic residues; that stretch reads EEKGKDEQKKDEQ. A compositionally biased stretch (acidic residues) spans 855–864; the sequence is KEQDEEEDGE. Asn876 carries N-linked (GlcNAc...) asparagine glycosylation. The segment covering 883-896 has biased composition (basic and acidic residues); that stretch reads EENKNEVKGEEHLQ. The span at 897 to 907 shows a compositional bias: low complexity; the sequence is GSEQSIEASES. Basic and acidic residues predominate over residues 908–917; sequence SQKDETKETE. The span at 918–936 shows a compositional bias: acidic residues; sequence DKEEYVNANDDESSEEDTT. Over residues 937-947 the composition is skewed to polar residues; the sequence is PNETNKTDNGS. N-linked (GlcNAc...) asparagine glycosylation is found at Asn938, Asn941, and Asn945. Asn945 carries GPI-anchor amidated asparagine lipidation. A propeptide spans 946–969 (removed in mature form); it reads GSSFFFAMSNALLVILLLLFIEFL.

As to quaternary structure, forms a complex composed of RH5, P113 and human BSG/basigin; the complex bridges the merozoite and host erythrocyte membranes. Within the complex, interacts with RH5 (via N-terminus); the interaction tethers RH5 to the merozoite membrane.

Its subcellular location is the cell membrane. In terms of biological role, membrane receptor which tethers secreted RH5 to the merozoite membrane during merozoite invasion of host erythocytes. This is Surface protein P113 from Plasmodium falciparum (isolate 3D7).